Reading from the N-terminus, the 505-residue chain is ADP-ribosylarginine hydrolase CG2909 (505 aa).

ADP-D-ribose contacts are provided by arginine 198, glycine 336, glycine 338, glycine 340, valine 341, tryptophan 342, tryptophan 377, aspartate 432, asparagine 439, glutamate 440, glycine 450, and aspartate 451.

It catalyses the reaction N(omega)-(ADP-D-ribosyl)-L-arginyl-[protein] + H2O = ADP-D-ribose + L-arginyl-[protein]. The catalysed reaction is N(omega)-(ADP-D-ribosyl)-L-arginine + H2O = ADP-D-ribose + L-arginine. Protein ADP-ribosyl hydrolase that specifically removes mono-ADP-ribosyl modifications from protein arginine residues. The polypeptide is ADP-ribosylarginine hydrolase CG2909 (Drosophila melanogaster (Fruit fly)).